We begin with the raw amino-acid sequence, 462 residues long: Fumarate hydratase class II (462 aa).

Substrate is bound by residues 97 to 99, 127 to 130, 137 to 139, and Thr185; these read SGT, HPND, and SSN. The active-site Proton donor/acceptor is His186. Ser316 is an active-site residue. Residues Ser317 and 322–324 contribute to the substrate site; that span reads KVN.

It belongs to the class-II fumarase/aspartase family. Fumarase subfamily. As to quaternary structure, homotetramer.

The protein localises to the cytoplasm. The catalysed reaction is (S)-malate = fumarate + H2O. It functions in the pathway carbohydrate metabolism; tricarboxylic acid cycle; (S)-malate from fumarate: step 1/1. In terms of biological role, involved in the TCA cycle. Catalyzes the stereospecific interconversion of fumarate to L-malate. In Bacillus anthracis, this protein is Fumarate hydratase class II.